The sequence spans 303 residues: UDP-N-acetylenolpyruvoylglucosamine reductase (303 aa).

The FAD-binding PCMH-type domain maps to 27–191 (VGGPAARLYK…ISAKLQLTPG (165 aa)). Residue Arg171 is part of the active site. Ser220 acts as the Proton donor in catalysis. Glu291 is a catalytic residue.

It belongs to the MurB family. The cofactor is FAD.

Its subcellular location is the cytoplasm. The catalysed reaction is UDP-N-acetyl-alpha-D-muramate + NADP(+) = UDP-N-acetyl-3-O-(1-carboxyvinyl)-alpha-D-glucosamine + NADPH + H(+). Its pathway is cell wall biogenesis; peptidoglycan biosynthesis. In terms of biological role, cell wall formation. The sequence is that of UDP-N-acetylenolpyruvoylglucosamine reductase from Legionella pneumophila (strain Paris).